The following is a 91-amino-acid chain: C-C motif chemokine 5 (91 aa).

The signal sequence occupies residues 1-23; that stretch reads MKISAAVLTVVLMAASLCAPASA. 2 disulfide bridges follow: Cys33–Cys57 and Cys34–Cys73.

This sequence belongs to the intercrine beta (chemokine CC) family.

The protein resides in the secreted. Chemoattractant for blood monocytes, memory T-helper cells and eosinophils. Causes the release of histamine from basophils and activates eosinophils. May activate several chemokine receptors including CCR1, CCR3, CCR4 and CCR5. May also be an agonist of the G protein-coupled receptor GPR75. Together with GPR75, may play a role in neuron survival through activation of a downstream signaling pathway involving the PI3, Akt and MAP kinases. By activating GPR75 may also play a role in insulin secretion by islet cells. This is C-C motif chemokine 5 (CCL5) from Sigmodon hispidus (Hispid cotton rat).